Reading from the N-terminus, the 317-residue chain is Adenine deaminase (317 aa).

Residues His14, His16, and His194 each coordinate Zn(2+). Glu197 (proton donor) is an active-site residue. Asp275 is a Zn(2+) binding site. Residue Asp276 coordinates substrate.

It belongs to the metallo-dependent hydrolases superfamily. Adenosine and AMP deaminases family. Adenine deaminase type 2 subfamily. Zn(2+) is required as a cofactor.

The enzyme catalyses adenine + H2O + H(+) = hypoxanthine + NH4(+). In terms of biological role, catalyzes the hydrolytic deamination of adenine to hypoxanthine. Plays an important role in the purine salvage pathway and in nitrogen catabolism. This is Adenine deaminase from Bordetella bronchiseptica (strain ATCC BAA-588 / NCTC 13252 / RB50) (Alcaligenes bronchisepticus).